The following is a 466-amino-acid chain: Soluble pyridine nucleotide transhydrogenase (466 aa).

FAD is bound at residue 36-45 (ERYQNVGGGC).

The protein belongs to the class-I pyridine nucleotide-disulfide oxidoreductase family. As to quaternary structure, homooligomer; probable homooctamer. FAD is required as a cofactor.

It is found in the cytoplasm. The enzyme catalyses NAD(+) + NADPH = NADH + NADP(+). In terms of biological role, conversion of NADPH, generated by peripheral catabolic pathways, to NADH, which can enter the respiratory chain for energy generation. In Escherichia coli O157:H7, this protein is Soluble pyridine nucleotide transhydrogenase.